Consider the following 274-residue polypeptide: 2,3,4,5-tetrahydropyridine-2,6-dicarboxylate N-succinyltransferase (274 aa).

2 residues coordinate substrate: R104 and D141.

It belongs to the transferase hexapeptide repeat family. Homotrimer.

It localises to the cytoplasm. The enzyme catalyses (S)-2,3,4,5-tetrahydrodipicolinate + succinyl-CoA + H2O = (S)-2-succinylamino-6-oxoheptanedioate + CoA. It participates in amino-acid biosynthesis; L-lysine biosynthesis via DAP pathway; LL-2,6-diaminopimelate from (S)-tetrahydrodipicolinate (succinylase route): step 1/3. The chain is 2,3,4,5-tetrahydropyridine-2,6-dicarboxylate N-succinyltransferase from Escherichia coli O127:H6 (strain E2348/69 / EPEC).